The sequence spans 195 residues: Putative C-P lyase subunit protein HtxG (195 aa).

This sequence belongs to the PhnH family.

Its function is as follows. Belongs to an operon involved in hypophosphite oxidation. Exact function not known. In Stutzerimonas stutzeri (Pseudomonas stutzeri), this protein is Putative C-P lyase subunit protein HtxG (htxG).